The primary structure comprises 172 residues: Transcriptional regulator CdrL (172 aa).

Positions Ser72 to Glu113 are disordered. Residues Cys116–Gly160 form a DZANK-type zinc finger.

This sequence belongs to the CdrL family.

The protein resides in the cytoplasm. Its function is as follows. Transcriptional regulator involved in the control of cell division. The sequence is that of Transcriptional regulator CdrL from Halobacterium salinarum (strain ATCC 29341 / DSM 671 / R1).